A 123-amino-acid polypeptide reads, in one-letter code: Large-conductance mechanosensitive channel (123 aa).

Transmembrane regions (helical) follow at residues 14 to 34 (VLDLAVGVIIGSAFTGLVTSL) and 67 to 87 (GNFINDVLNFLIIAFVVFLLV).

The protein belongs to the MscL family. As to quaternary structure, homopentamer.

The protein localises to the cell membrane. Channel that opens in response to stretch forces in the membrane lipid bilayer. May participate in the regulation of osmotic pressure changes within the cell. This Lacticaseibacillus casei (strain BL23) (Lactobacillus casei) protein is Large-conductance mechanosensitive channel.